The following is a 103-amino-acid chain: MSNQRIRIRLKSFDHRLIDQSSQEIVETAKRTGAQVCGPIPMPTRIERFNVLTSPHVNKDARDQYEIRTYKRLIDIVQPTDKTVDALMKLDLAAGVDVQIALG.

It belongs to the universal ribosomal protein uS10 family. In terms of assembly, part of the 30S ribosomal subunit.

Functionally, involved in the binding of tRNA to the ribosomes. This is Small ribosomal subunit protein uS10 from Acinetobacter baylyi (strain ATCC 33305 / BD413 / ADP1).